We begin with the raw amino-acid sequence, 457 residues long: Glutamate--tRNA ligase 2 (457 aa).

The short motif at P8–N18 is the 'HIGH' region element. Residues G249–R253 carry the 'KMSKS' region motif. ATP is bound at residue K252.

Belongs to the class-I aminoacyl-tRNA synthetase family. Glutamate--tRNA ligase type 1 subfamily. In terms of assembly, monomer.

The protein resides in the cytoplasm. The enzyme catalyses tRNA(Glu) + L-glutamate + ATP = L-glutamyl-tRNA(Glu) + AMP + diphosphate. Catalyzes the attachment of glutamate to tRNA(Glu) in a two-step reaction: glutamate is first activated by ATP to form Glu-AMP and then transferred to the acceptor end of tRNA(Glu). This Bartonella tribocorum (strain CIP 105476 / IBS 506) protein is Glutamate--tRNA ligase 2.